The chain runs to 60 residues: Large ribosomal subunit protein uL30 (60 aa).

Belongs to the universal ribosomal protein uL30 family. Part of the 50S ribosomal subunit.

This is Large ribosomal subunit protein uL30 from Streptomyces griseus subsp. griseus (strain JCM 4626 / CBS 651.72 / NBRC 13350 / KCC S-0626 / ISP 5235).